The following is a 149-amino-acid chain: Urease accessory protein UreE (149 aa).

It belongs to the UreE family.

It localises to the cytoplasm. In terms of biological role, involved in urease metallocenter assembly. Binds nickel. Probably functions as a nickel donor during metallocenter assembly. This is Urease accessory protein UreE from Synechococcus sp. (strain JA-3-3Ab) (Cyanobacteria bacterium Yellowstone A-Prime).